Consider the following 299-residue polypeptide: Pyridoxal 5'-phosphate synthase subunit PdxS (299 aa).

Residue D29 participates in D-ribose 5-phosphate binding. Residue K86 is the Schiff-base intermediate with D-ribose 5-phosphate of the active site. A D-ribose 5-phosphate-binding site is contributed by G158. R170 contacts D-glyceraldehyde 3-phosphate. Residues G219 and 240-241 (GS) contribute to the D-ribose 5-phosphate site.

The protein belongs to the PdxS/SNZ family. As to quaternary structure, in the presence of PdxT, forms a dodecamer of heterodimers.

The catalysed reaction is aldehydo-D-ribose 5-phosphate + D-glyceraldehyde 3-phosphate + L-glutamine = pyridoxal 5'-phosphate + L-glutamate + phosphate + 3 H2O + H(+). The protein operates within cofactor biosynthesis; pyridoxal 5'-phosphate biosynthesis. Its function is as follows. Catalyzes the formation of pyridoxal 5'-phosphate from ribose 5-phosphate (RBP), glyceraldehyde 3-phosphate (G3P) and ammonia. The ammonia is provided by the PdxT subunit. Can also use ribulose 5-phosphate and dihydroxyacetone phosphate as substrates, resulting from enzyme-catalyzed isomerization of RBP and G3P, respectively. In Mycobacterium bovis (strain ATCC BAA-935 / AF2122/97), this protein is Pyridoxal 5'-phosphate synthase subunit PdxS.